Consider the following 357-residue polypeptide: Phosphoribosylformylglycinamidine cyclo-ligase (357 aa).

Belongs to the AIR synthase family.

The protein localises to the cytoplasm. The enzyme catalyses 2-formamido-N(1)-(5-O-phospho-beta-D-ribosyl)acetamidine + ATP = 5-amino-1-(5-phospho-beta-D-ribosyl)imidazole + ADP + phosphate + H(+). Its pathway is purine metabolism; IMP biosynthesis via de novo pathway; 5-amino-1-(5-phospho-D-ribosyl)imidazole from N(2)-formyl-N(1)-(5-phospho-D-ribosyl)glycinamide: step 2/2. The polypeptide is Phosphoribosylformylglycinamidine cyclo-ligase (Allorhizobium ampelinum (strain ATCC BAA-846 / DSM 112012 / S4) (Agrobacterium vitis (strain S4))).